Reading from the N-terminus, the 678-residue chain is Sulfoquinovosidase (678 aa).

A 6-sulfo-alpha-D-quinovosyldiacylglycerol contacts are provided by Gln288, Arg301, Val302, and Trp304. Catalysis depends on Asp405, which acts as the Nucleophile. Glu408 is a catalytic residue. Residue Asp472 is the Proton donor of the active site. An a 6-sulfo-alpha-D-quinovosyldiacylglycerol-binding site is contributed by His537.

It belongs to the glycosyl hydrolase 31 family.

The enzyme catalyses a 6-sulfo-alpha-D-quinovosyldiacylglycerol + H2O = 6-sulfo-alpha-D-quinovose + a 1,2-diacyl-sn-glycerol. It catalyses the reaction 3-(6-sulfo-alpha-D-quinovosyl)glycerol + H2O = 6-sulfo-alpha-D-quinovose + glycerol. Its pathway is glycolipid metabolism. Is inactivated in vitro by the mechanism-based inactivator 5-fluoro-beta-L-idopyranosyl fluoride (5FIdoF) that yields a covalent glycosyl-enzyme complex with the active site nucleophile Asp-405. Catalyzes the hydrolysis of sulfoquinovosyl diacylglycerides (SQDG) to sulfoquinovose (SQ), which is then degraded by E.coli through the SQ Embden-Meyerhof-Parnas (SQ-EMP) sulfoglycolysis pathway as a source of carbon and sulfur. Therefore, is likely involved in the utilization of the sulfoquinovose headgroup found in ubiquitous plant sulfolipids. Is also able to hydrolyze simple sulfoquinovosides such as sulfoquinovosyl glycerol (SQGro). In vitro, can use the substrate analog para-nitrophenyl alpha-sulfoquinovoside (PNPSQ), but shows no detectable activity toward 4-nitrophenyl alpha-D-glucopyranoside (PNPGlc). Is a retaining glycoside hydrolase, since it forms the alpha anomer of SQ. Also exhibits some alpha-glucosidase activity against alpha-glucosyl fluoride in vitro, although natural substrates, such as alpha-glucobioses are scarcely hydrolyzed. This chain is Sulfoquinovosidase, found in Escherichia coli (strain K12).